A 437-amino-acid polypeptide reads, in one-letter code: 3-phosphoshikimate 1-carboxyvinyltransferase (437 aa).

3-phosphoshikimate contacts are provided by lysine 22, serine 23, and arginine 27. Position 22 (lysine 22) interacts with phosphoenolpyruvate. Glycine 94 and arginine 122 together coordinate phosphoenolpyruvate. Positions 167, 169, 314, and 341 each coordinate 3-phosphoshikimate. Residue glutamine 169 coordinates phosphoenolpyruvate. The Proton acceptor role is filled by aspartate 314. Residues arginine 345 and arginine 389 each coordinate phosphoenolpyruvate.

This sequence belongs to the EPSP synthase family. As to quaternary structure, monomer.

The protein localises to the cytoplasm. The catalysed reaction is 3-phosphoshikimate + phosphoenolpyruvate = 5-O-(1-carboxyvinyl)-3-phosphoshikimate + phosphate. It functions in the pathway metabolic intermediate biosynthesis; chorismate biosynthesis; chorismate from D-erythrose 4-phosphate and phosphoenolpyruvate: step 6/7. Functionally, catalyzes the transfer of the enolpyruvyl moiety of phosphoenolpyruvate (PEP) to the 5-hydroxyl of shikimate-3-phosphate (S3P) to produce enolpyruvyl shikimate-3-phosphate and inorganic phosphate. The protein is 3-phosphoshikimate 1-carboxyvinyltransferase of Oenococcus oeni (strain ATCC BAA-331 / PSU-1).